The chain runs to 288 residues: Bifunctional protein FolD (288 aa).

NADP(+)-binding positions include 166–168 (GAS) and Ile-232.

Belongs to the tetrahydrofolate dehydrogenase/cyclohydrolase family. Homodimer.

The enzyme catalyses (6R)-5,10-methylene-5,6,7,8-tetrahydrofolate + NADP(+) = (6R)-5,10-methenyltetrahydrofolate + NADPH. It carries out the reaction (6R)-5,10-methenyltetrahydrofolate + H2O = (6R)-10-formyltetrahydrofolate + H(+). The protein operates within one-carbon metabolism; tetrahydrofolate interconversion. Its function is as follows. Catalyzes the oxidation of 5,10-methylenetetrahydrofolate to 5,10-methenyltetrahydrofolate and then the hydrolysis of 5,10-methenyltetrahydrofolate to 10-formyltetrahydrofolate. This chain is Bifunctional protein FolD, found in Escherichia coli (strain SMS-3-5 / SECEC).